A 1042-amino-acid chain; its full sequence is Isoleucine--tRNA ligase (1042 aa).

A 'HIGH' region motif is present at residues 48–58; it reads PFATGLPHFGH. The 'KMSKS' region signature appears at 594 to 598; sequence KMSKS. K597 is an ATP binding site.

This sequence belongs to the class-I aminoacyl-tRNA synthetase family. IleS type 2 subfamily. As to quaternary structure, monomer. It depends on Zn(2+) as a cofactor.

It is found in the cytoplasm. The catalysed reaction is tRNA(Ile) + L-isoleucine + ATP = L-isoleucyl-tRNA(Ile) + AMP + diphosphate. Its function is as follows. Catalyzes the attachment of isoleucine to tRNA(Ile). As IleRS can inadvertently accommodate and process structurally similar amino acids such as valine, to avoid such errors it has two additional distinct tRNA(Ile)-dependent editing activities. One activity is designated as 'pretransfer' editing and involves the hydrolysis of activated Val-AMP. The other activity is designated 'posttransfer' editing and involves deacylation of mischarged Val-tRNA(Ile). This Borreliella afzelii (strain PKo) (Borrelia afzelii) protein is Isoleucine--tRNA ligase.